The primary structure comprises 510 residues: NAD(P)H-quinone oxidoreductase subunit 2 A, chloroplastic (510 aa).

13 helical membrane-spanning segments follow: residues 24–44 (LLLF…GLIL), 59–79 (WFYF…LFRW), 99–119 (IFQF…VEYI), 124–144 (MAIT…MFLC), 149–169 (LITI…LSGY), 183–203 (YLLM…WLYG), 229–249 (ISIA…PAPF), 295–315 (WHLL…LIAI), 323–343 (MLAY…IVGD), 347–367 (GYAS…GTFA), 395–415 (ALSS…AGFF), 418–438 (LHLF…IGLL), and 484–504 (MIVC…IIAI).

The protein belongs to the complex I subunit 2 family. In terms of assembly, NDH is composed of at least 16 different subunits, 5 of which are encoded in the nucleus.

Its subcellular location is the plastid. It is found in the chloroplast thylakoid membrane. It carries out the reaction a plastoquinone + NADH + (n+1) H(+)(in) = a plastoquinol + NAD(+) + n H(+)(out). The enzyme catalyses a plastoquinone + NADPH + (n+1) H(+)(in) = a plastoquinol + NADP(+) + n H(+)(out). Functionally, NDH shuttles electrons from NAD(P)H:plastoquinone, via FMN and iron-sulfur (Fe-S) centers, to quinones in the photosynthetic chain and possibly in a chloroplast respiratory chain. The immediate electron acceptor for the enzyme in this species is believed to be plastoquinone. Couples the redox reaction to proton translocation, and thus conserves the redox energy in a proton gradient. The protein is NAD(P)H-quinone oxidoreductase subunit 2 A, chloroplastic of Amborella trichopoda.